The sequence spans 183 residues: Ferritin heavy chain (183 aa).

Met1 bears the N-acetylmethionine mark. At Thr2 the chain carries N-acetylthreonine; in Ferritin heavy chain, N-terminally processed. In terms of domain architecture, Ferritin-like diiron spans 11 to 160 (QNYHQDSEAA…DHVTNLRKMG (150 aa)). 5 residues coordinate Fe cation: Glu28, Glu63, His66, Glu108, and Gln142. Phosphoserine occurs at positions 179 and 183.

This sequence belongs to the ferritin family. Oligomer of 24 subunits. There are two types of subunits: L (light) chain and H (heavy) chain. The major chain can be light or heavy, depending on the species and tissue type. The functional molecule forms a roughly spherical shell with a diameter of 12 nm and contains a central cavity into which the insoluble mineral iron core is deposited. Interacts with NCOA4; NCOA4 promotes targeting of the iron-binding ferritin complex to autolysosomes following starvation or iron depletion. As to expression, ubiquitous.

Its subcellular location is the cytoplasm. It localises to the lysosome. The protein localises to the cytoplasmic vesicle. The protein resides in the autophagosome. The enzyme catalyses 4 Fe(2+) + O2 + 4 H(+) = 4 Fe(3+) + 2 H2O. Stores iron in a soluble, non-toxic, readily available form. Important for iron homeostasis. Has ferroxidase activity. Iron is taken up in the ferrous form and deposited as ferric hydroxides after oxidation. Also plays a role in delivery of iron to cells. Mediates iron uptake in capsule cells of the developing kidney. Delivery to lysosomes is mediated by the cargo receptor NCOA4 for autophagic degradation and release of iron. This Trichosurus vulpecula (Brush-tailed possum) protein is Ferritin heavy chain (FTH1).